We begin with the raw amino-acid sequence, 245 residues long: 3-deoxy-manno-octulosonate cytidylyltransferase (245 aa).

This sequence belongs to the KdsB family.

It localises to the cytoplasm. It carries out the reaction 3-deoxy-alpha-D-manno-oct-2-ulosonate + CTP = CMP-3-deoxy-beta-D-manno-octulosonate + diphosphate. It functions in the pathway nucleotide-sugar biosynthesis; CMP-3-deoxy-D-manno-octulosonate biosynthesis; CMP-3-deoxy-D-manno-octulosonate from 3-deoxy-D-manno-octulosonate and CTP: step 1/1. It participates in bacterial outer membrane biogenesis; lipopolysaccharide biosynthesis. Activates KDO (a required 8-carbon sugar) for incorporation into bacterial lipopolysaccharide in Gram-negative bacteria. This chain is 3-deoxy-manno-octulosonate cytidylyltransferase, found in Acaryochloris marina (strain MBIC 11017).